We begin with the raw amino-acid sequence, 393 residues long: NAD(P)H-quinone oxidoreductase subunit H, chloroplastic (393 aa).

The protein belongs to the complex I 49 kDa subunit family. In terms of assembly, NDH is composed of at least 16 different subunits, 5 of which are encoded in the nucleus.

The protein resides in the plastid. It is found in the chloroplast thylakoid membrane. The catalysed reaction is a plastoquinone + NADH + (n+1) H(+)(in) = a plastoquinol + NAD(+) + n H(+)(out). It carries out the reaction a plastoquinone + NADPH + (n+1) H(+)(in) = a plastoquinol + NADP(+) + n H(+)(out). Its function is as follows. NDH shuttles electrons from NAD(P)H:plastoquinone, via FMN and iron-sulfur (Fe-S) centers, to quinones in the photosynthetic chain and possibly in a chloroplast respiratory chain. The immediate electron acceptor for the enzyme in this species is believed to be plastoquinone. Couples the redox reaction to proton translocation, and thus conserves the redox energy in a proton gradient. In Panax ginseng (Korean ginseng), this protein is NAD(P)H-quinone oxidoreductase subunit H, chloroplastic.